The chain runs to 454 residues: Cobyrinate a,c-diamide synthase (454 aa).

Residues 247-442 (KIGIAMDSAF…IHAHWASNPN (196 aa)) form the GATase cobBQ-type domain. The active-site Nucleophile is Cys329.

The protein belongs to the CobB/CbiA family. The cofactor is Mg(2+).

It catalyses the reaction cob(II)yrinate + 2 L-glutamine + 2 ATP + 2 H2O = cob(II)yrinate a,c diamide + 2 L-glutamate + 2 ADP + 2 phosphate + 2 H(+). It functions in the pathway cofactor biosynthesis; adenosylcobalamin biosynthesis; cob(II)yrinate a,c-diamide from sirohydrochlorin (anaerobic route): step 10/10. In terms of biological role, catalyzes the ATP-dependent amidation of the two carboxylate groups at positions a and c of cobyrinate, using either L-glutamine or ammonia as the nitrogen source. In Leptospira interrogans serogroup Icterohaemorrhagiae serovar copenhageni (strain Fiocruz L1-130), this protein is Cobyrinate a,c-diamide synthase.